The following is a 742-amino-acid chain: Phosphoribosylformylglycinamidine synthase subunit PurL (742 aa).

The active site involves His-54. Positions 57 and 96 each coordinate ATP. Glu-98 contributes to the Mg(2+) binding site. Residues 99-102 (SHNH) and Arg-121 contribute to the substrate site. The Proton acceptor role is filled by His-100. Asp-122 serves as a coordination point for Mg(2+). A substrate-binding site is contributed by Gln-245. Residue Asp-273 coordinates Mg(2+). Residue 317 to 319 (ESQ) coordinates substrate. Positions 500 and 537 each coordinate ATP. Residue Asn-538 coordinates Mg(2+). Ser-540 contacts substrate.

This sequence belongs to the FGAMS family. As to quaternary structure, monomer. Part of the FGAM synthase complex composed of 1 PurL, 1 PurQ and 2 PurS subunits.

Its subcellular location is the cytoplasm. It catalyses the reaction N(2)-formyl-N(1)-(5-phospho-beta-D-ribosyl)glycinamide + L-glutamine + ATP + H2O = 2-formamido-N(1)-(5-O-phospho-beta-D-ribosyl)acetamidine + L-glutamate + ADP + phosphate + H(+). It functions in the pathway purine metabolism; IMP biosynthesis via de novo pathway; 5-amino-1-(5-phospho-D-ribosyl)imidazole from N(2)-formyl-N(1)-(5-phospho-D-ribosyl)glycinamide: step 1/2. Functionally, part of the phosphoribosylformylglycinamidine synthase complex involved in the purines biosynthetic pathway. Catalyzes the ATP-dependent conversion of formylglycinamide ribonucleotide (FGAR) and glutamine to yield formylglycinamidine ribonucleotide (FGAM) and glutamate. The FGAM synthase complex is composed of three subunits. PurQ produces an ammonia molecule by converting glutamine to glutamate. PurL transfers the ammonia molecule to FGAR to form FGAM in an ATP-dependent manner. PurS interacts with PurQ and PurL and is thought to assist in the transfer of the ammonia molecule from PurQ to PurL. This is Phosphoribosylformylglycinamidine synthase subunit PurL from Bacillus velezensis (strain DSM 23117 / BGSC 10A6 / LMG 26770 / FZB42) (Bacillus amyloliquefaciens subsp. plantarum).